The chain runs to 149 residues: Flavodoxin YqcA (149 aa).

Positions 4-145 constitute a Flavodoxin-like domain; that stretch reads IGIFVGTMYG…ESNPWVEQWG (142 aa). FMN contacts are provided by residues 10–15 and 99–101; these read TMYGNS and NFC.

Belongs to the flavodoxin family. MioC subfamily. Monomer. It depends on FMN as a cofactor.

Probable electron transporter. In Escherichia coli (strain K12), this protein is Flavodoxin YqcA (yqcA).